We begin with the raw amino-acid sequence, 170 residues long: NADH-quinone oxidoreductase subunit B (170 aa).

The [4Fe-4S] cluster site is built by cysteine 37, cysteine 38, cysteine 102, and cysteine 131.

This sequence belongs to the complex I 20 kDa subunit family. NDH-1 is composed of 14 different subunits. Subunits NuoB, C, D, E, F, and G constitute the peripheral sector of the complex. It depends on [4Fe-4S] cluster as a cofactor.

The protein resides in the cell inner membrane. It carries out the reaction a quinone + NADH + 5 H(+)(in) = a quinol + NAD(+) + 4 H(+)(out). Its function is as follows. NDH-1 shuttles electrons from NADH, via FMN and iron-sulfur (Fe-S) centers, to quinones in the respiratory chain. The immediate electron acceptor for the enzyme in this species is believed to be ubiquinone. Couples the redox reaction to proton translocation (for every two electrons transferred, four hydrogen ions are translocated across the cytoplasmic membrane), and thus conserves the redox energy in a proton gradient. This chain is NADH-quinone oxidoreductase subunit B, found in Geotalea daltonii (strain DSM 22248 / JCM 15807 / FRC-32) (Geobacter daltonii).